Reading from the N-terminus, the 464-residue chain is Probable 1,4-beta-D-glucan cellobiohydrolase C (464 aa).

The signal sequence occupies residues 1 to 19 (MKNFAPSLALSLLLPTVQA). The CBM1 domain maps to 20-55 (QQTMWGQCGGAGWSGATDCVAGGVCSTQNAYYAQCL). Intrachain disulfides connect cysteine 27-cysteine 44 and cysteine 38-cysteine 54. Residues 59–102 (TTATTLSTTSKGTTTTTTSSTTSTGGGSSSTTTKTSTSAGPTVT) form a thr-rich linker region. A compositionally biased stretch (low complexity) spans 65–100 (STTSKGTTTTTTSSTTSTGGGSSSTTTKTSTSAGPT). The segment at 65-108 (STTSKGTTTTTTSSTTSTGGGSSSTTTKTSTSAGPTVTGSPSGN) is disordered. The segment at 103 to 464 (GSPSGNPFSG…QLLTNANPAF (362 aa)) is catalytic. Residue aspartate 194 is part of the active site. Disulfide bonds link cysteine 195–cysteine 254 and cysteine 386–cysteine 433. Aspartate 240 (proton donor) is an active-site residue. The active-site Nucleophile is aspartate 419.

The protein belongs to the glycosyl hydrolase 6 (cellulase B) family.

It is found in the secreted. The catalysed reaction is Hydrolysis of (1-&gt;4)-beta-D-glucosidic linkages in cellulose and cellotetraose, releasing cellobiose from the non-reducing ends of the chains.. Functionally, the biological conversion of cellulose to glucose generally requires three types of hydrolytic enzymes: (1) Endoglucanases which cut internal beta-1,4-glucosidic bonds; (2) Exocellobiohydrolases that cut the disaccharide cellobiose from the non-reducing end of the cellulose polymer chain; (3) Beta-1,4-glucosidases which hydrolyze the cellobiose and other short cello-oligosaccharides to glucose. This Aspergillus clavatus (strain ATCC 1007 / CBS 513.65 / DSM 816 / NCTC 3887 / NRRL 1 / QM 1276 / 107) protein is Probable 1,4-beta-D-glucan cellobiohydrolase C (cbhC).